The sequence spans 162 residues: Blue copper protein 1b (162 aa).

Residues 1 to 23 form the signal peptide; the sequence is MASSRVVLILSISMVLLSSVAIA. The 101-residue stretch at 25–125 folds into the Phytocyanin domain; that stretch reads TDYIVGDDKG…QMKLVITVLA (101 aa). H65 provides a ligand contact to Cu cation. A glycan (N-linked (GlcNAc...) asparagine) is linked at N71. An intrachain disulfide couples C78 to C112. Positions 106, 111, and 117 each coordinate Cu cation. The chain crosses the membrane as a helical span at residues 142–162; that stretch reads VVSSLFGVVMAIMVAIAVIFA.

The protein localises to the membrane. The protein is Blue copper protein 1b of Medicago truncatula (Barrel medic).